The following is a 385-amino-acid chain: F-box only protein 4 (385 aa).

Phosphoserine is present on residues Ser-11 and Ser-46. The 47-residue stretch at 54–100 (TSALTRLPVDVQLYILSFLSPHDLCQLGSTDHYWNKTIRDPILWRYF) folds into the F-box domain.

In terms of assembly, homodimer. Part of the SCF (SKP1-CUL1-F-box) E3 ubiquitin-protein ligase complex SCF(FBXO4) formed of CUL1, SKP1, RBX1 and FBXO4. Interacts with TERF1; this interaction is prevented in the presence of GNL3L. Identified in a complex with CRYAB and CCND1. In terms of processing, phosphorylation at Ser-11 varies during the cell cycle. It is low in resting cells and high in the S phase and the G2/M phase of the cell cycle. Phosphorylation is decreased during late G1 phase. Phosphorylation at Ser-11 is important for homodimerization and for optimal ubiquitin ligase activity towards CCND1.

It is found in the cytoplasm. It participates in protein modification; protein ubiquitination. Substrate recognition component of a SCF (SKP1-CUL1-F-box protein) E3 ubiquitin-protein ligase complex that mediates the ubiquitination and subsequent proteasomal degradation of target proteins. Promotes ubiquitination of cyclin-D1 (CCND1) and its subsequent proteasomal degradation. However, it does not act as a major regulator of CCND1 stability during the G1/S transition. Recognizes TERF1 and promotes its ubiquitination together with UBE2D1. Promotes ubiquitination of FXR1 following phosphorylation of FXR1 by GSK3B, leading to FXR1 degradation by the proteasome. This is F-box only protein 4 from Mus musculus (Mouse).